Here is a 503-residue protein sequence, read N- to C-terminus: Aromatase (503 aa).

3 helical membrane passes run 19-39, 53-73, and 303-323; these read EVVP…LLVW, FLGI…IGSA, and MLIA…FLIA. Residues D309 and M374 each coordinate substrate. C437 contacts heme.

This sequence belongs to the cytochrome P450 family. The cofactor is heme.

The protein localises to the endoplasmic reticulum membrane. The protein resides in the microsome membrane. It catalyses the reaction testosterone + 3 reduced [NADPH--hemoprotein reductase] + 3 O2 = 17beta-estradiol + formate + 3 oxidized [NADPH--hemoprotein reductase] + 4 H2O + 4 H(+). The catalysed reaction is androst-4-ene-3,17-dione + 3 reduced [NADPH--hemoprotein reductase] + 3 O2 = estrone + formate + 3 oxidized [NADPH--hemoprotein reductase] + 4 H2O + 4 H(+). The enzyme catalyses androst-4-ene-3,17-dione + reduced [NADPH--hemoprotein reductase] + O2 = 19-hydroxyandrost-4-ene-3,17-dione + oxidized [NADPH--hemoprotein reductase] + H2O + H(+). It carries out the reaction 19-hydroxyandrost-4-ene-3,17-dione + reduced [NADPH--hemoprotein reductase] + O2 = 19-oxo-androst-4-ene-3,17-dione + oxidized [NADPH--hemoprotein reductase] + 2 H2O + H(+). It catalyses the reaction 19-oxo-androst-4-ene-3,17-dione + reduced [NADPH--hemoprotein reductase] + O2 = estrone + formate + oxidized [NADPH--hemoprotein reductase] + H2O + 2 H(+). The catalysed reaction is estrone + reduced [NADPH--hemoprotein reductase] + O2 = 2-hydroxyestrone + oxidized [NADPH--hemoprotein reductase] + H2O + H(+). The enzyme catalyses 17beta-hydroxy-5alpha-androstan-3-one + reduced [NADPH--hemoprotein reductase] + O2 = 17beta,19-dihydroxy-3-oxo-5alpha-androstanone + oxidized [NADPH--hemoprotein reductase] + H2O + H(+). It carries out the reaction 17beta,19-dihydroxy-3-oxo-5alpha-androstanone + reduced [NADPH--hemoprotein reductase] + O2 = 17beta-hydroxy-3,19-dioxo-5alpha-androstanone + oxidized [NADPH--hemoprotein reductase] + 2 H2O + H(+). It catalyses the reaction 17beta-hydroxy-3,19-dioxo-5alpha-androstanone + reduced [NADPH--hemoprotein reductase] + O2 = 17beta-hydroxy-3-oxo-19-nor-5alpha-androst-1-ene + formate + oxidized [NADPH--hemoprotein reductase] + H2O + 2 H(+). It functions in the pathway steroid hormone biosynthesis. A cytochrome P450 monooxygenase that catalyzes the conversion of C19 androgens, androst-4-ene-3,17-dione (androstenedione) and testosterone to the C18 estrogens, estrone and estradiol, respectively. Catalyzes three successive oxidations of C19 androgens: two conventional oxidations at C19 yielding 19-hydroxy and 19-oxo/19-aldehyde derivatives, followed by a third oxidative aromatization step that involves C1-beta hydrogen abstraction combined with cleavage of the C10-C19 bond to yield a phenolic A ring and formic acid. Alternatively, the third oxidative reaction yields a 19-norsteroid and formic acid. Converts dihydrotestosterone to delta1,10-dehydro 19-nordihydrotestosterone and may play a role in homeostasis of this potent androgen. Also displays 2-hydroxylase activity toward estrone. Mechanistically, uses molecular oxygen inserting one oxygen atom into a substrate, and reducing the second into a water molecule, with two electrons provided by NADPH via cytochrome P450 reductase (CPR; NADPH-ferrihemoprotein reductase). The protein is Aromatase (CYP19A1) of Capra hircus (Goat).